A 207-amino-acid polypeptide reads, in one-letter code: Large ribosomal subunit protein uL4 (207 aa).

Positions 45–78 are disordered; the sequence is RQGTHKTKNRAEVSGGGRKPWRQKGTGRARQGSI.

This sequence belongs to the universal ribosomal protein uL4 family. In terms of assembly, part of the 50S ribosomal subunit.

Its function is as follows. One of the primary rRNA binding proteins, this protein initially binds near the 5'-end of the 23S rRNA. It is important during the early stages of 50S assembly. It makes multiple contacts with different domains of the 23S rRNA in the assembled 50S subunit and ribosome. In terms of biological role, forms part of the polypeptide exit tunnel. This Geobacillus sp. (strain WCH70) protein is Large ribosomal subunit protein uL4.